A 212-amino-acid polypeptide reads, in one-letter code: ATP-dependent dethiobiotin synthetase BioD (212 aa).

Residue 13–18 participates in ATP binding; it reads GIGKTV. A Mg(2+)-binding site is contributed by Thr17. Residue Lys33 is part of the active site. Ser37 provides a ligand contact to substrate. Residue Glu100 coordinates Mg(2+). ATP contacts are provided by residues 100–103 and 184–186; these read EGAG and PRL.

The protein belongs to the dethiobiotin synthetase family. In terms of assembly, homodimer. Requires Mg(2+) as cofactor.

Its subcellular location is the cytoplasm. The catalysed reaction is (7R,8S)-7,8-diammoniononanoate + CO2 + ATP = (4R,5S)-dethiobiotin + ADP + phosphate + 3 H(+). The protein operates within cofactor biosynthesis; biotin biosynthesis; biotin from 7,8-diaminononanoate: step 1/2. Its function is as follows. Catalyzes a mechanistically unusual reaction, the ATP-dependent insertion of CO2 between the N7 and N8 nitrogen atoms of 7,8-diaminopelargonic acid (DAPA, also called 7,8-diammoniononanoate) to form a ureido ring. The sequence is that of ATP-dependent dethiobiotin synthetase BioD from Rhodopseudomonas palustris (strain ATCC BAA-98 / CGA009).